The chain runs to 78 residues: Delta-conotoxin TxVIA (78 aa).

The first 22 residues, 1 to 22, serve as a signal peptide directing secretion; the sequence is MKLTCMMIVAVLFLTAWTFATA. Residues 23 to 49 constitute a propeptide that is removed on maturation; it reads DDSGNGLENLFSNAHHQMKNPEASKLN. Intrachain disulfides connect C53–C68, C60–C72, and C67–C77. At M59 the chain carries Methionine sulfoxide; partial.

This sequence belongs to the conotoxin O1 superfamily. In terms of tissue distribution, expressed by the venom duct. Is present in all duct parts with a highest content in part 4 (distal part near the pharynx).

The protein localises to the secreted. Its function is as follows. Delta-conotoxins bind to site 6 of voltage-gated sodium channels (Nav) and inhibit the inactivation process. Binding of this toxin is strongly calcium-dependent but not voltage-dependent. The binding site is most likely on the extracellular side of the sodium channel. Binds receptor sites on both mollusk and rat central nervous system, but despite its high affinity binding to rat sodium channel, it has no functional effect in vivo and in vitro on it. Also has no effect on Gambusia fish. Is important in mollusk for the paralysis of the prey. Upon injection of the peptide, a subordinate lobster assumes an exaggerated dominant posture (of a 'King-Kong' lobster!). In Conus textile (Cloth-of-gold cone), this protein is Delta-conotoxin TxVIA.